A 207-amino-acid polypeptide reads, in one-letter code: dITP/XTP pyrophosphatase (207 aa).

A substrate-binding site is contributed by 10–15; it reads TRNAGK. Residues glutamate 43 and aspartate 72 each contribute to the Mg(2+) site. The Proton acceptor role is filled by aspartate 72. Residues serine 73, 161–164, lysine 184, and 189–190 contribute to the substrate site; these read FGYD and HR.

Belongs to the HAM1 NTPase family. Homodimer. Mg(2+) is required as a cofactor.

It catalyses the reaction XTP + H2O = XMP + diphosphate + H(+). It carries out the reaction dITP + H2O = dIMP + diphosphate + H(+). The catalysed reaction is ITP + H2O = IMP + diphosphate + H(+). Its function is as follows. Pyrophosphatase that catalyzes the hydrolysis of nucleoside triphosphates to their monophosphate derivatives, with a high preference for the non-canonical purine nucleotides XTP (xanthosine triphosphate), dITP (deoxyinosine triphosphate) and ITP. Seems to function as a house-cleaning enzyme that removes non-canonical purine nucleotides from the nucleotide pool, thus preventing their incorporation into DNA/RNA and avoiding chromosomal lesions. In Nitratidesulfovibrio vulgaris (strain ATCC 29579 / DSM 644 / CCUG 34227 / NCIMB 8303 / VKM B-1760 / Hildenborough) (Desulfovibrio vulgaris), this protein is dITP/XTP pyrophosphatase.